The primary structure comprises 459 residues: Chromosomal replication initiator protein DnaA (459 aa).

The tract at residues 1–74 (MQKIETFWYF…DEMAQGHFNE (74 aa)) is domain I, interacts with DnaA modulators. A domain II region spans residues 74–122 (EKIHFKLELKDPAEIKTATIKAPEPKSKEDKKPPTDKAHGTTARKTNPS). A disordered region spans residues 91 to 123 (ATIKAPEPKSKEDKKPPTDKAHGTTARKTNPSR). The segment covering 96–112 (PEPKSKEDKKPPTDKAH) has biased composition (basic and acidic residues). The domain III, AAA+ region stretch occupies residues 123-339 (RLNPAFTFDA…GALKRVLAYS (217 aa)). Residues Gly167, Gly169, Lys170, and Thr171 each contribute to the ATP site. A domain IV, binds dsDNA region spans residues 340–459 (RFTGHPISLD…YSTLIHILRG (120 aa)).

It belongs to the DnaA family. As to quaternary structure, oligomerizes as a right-handed, spiral filament on DNA at oriC.

It localises to the cytoplasm. Plays an essential role in the initiation and regulation of chromosomal replication. ATP-DnaA binds to the origin of replication (oriC) to initiate formation of the DNA replication initiation complex once per cell cycle. Binds the DnaA box (a 9 base pair repeat at the origin) and separates the double-stranded (ds)DNA. Forms a right-handed helical filament on oriC DNA; dsDNA binds to the exterior of the filament while single-stranded (ss)DNA is stabiized in the filament's interior. The ATP-DnaA-oriC complex binds and stabilizes one strand of the AT-rich DNA unwinding element (DUE), permitting loading of DNA polymerase. After initiation quickly degrades to an ADP-DnaA complex that is not apt for DNA replication. Binds acidic phospholipids. This chain is Chromosomal replication initiator protein DnaA, found in Nitrosomonas eutropha (strain DSM 101675 / C91 / Nm57).